We begin with the raw amino-acid sequence, 264 residues long: Tryptophan synthase alpha chain (264 aa).

Catalysis depends on proton acceptor residues Glu-45 and Asp-56.

This sequence belongs to the TrpA family. In terms of assembly, tetramer of two alpha and two beta chains.

It carries out the reaction (1S,2R)-1-C-(indol-3-yl)glycerol 3-phosphate + L-serine = D-glyceraldehyde 3-phosphate + L-tryptophan + H2O. It functions in the pathway amino-acid biosynthesis; L-tryptophan biosynthesis; L-tryptophan from chorismate: step 5/5. Its function is as follows. The alpha subunit is responsible for the aldol cleavage of indoleglycerol phosphate to indole and glyceraldehyde 3-phosphate. In Leptospira borgpetersenii serovar Hardjo-bovis (strain JB197), this protein is Tryptophan synthase alpha chain.